A 47-amino-acid polypeptide reads, in one-letter code: Photosystem II reaction center protein K (47 aa).

The propeptide occupies 1–10 (MAAFSLDLLA). A helical membrane pass occupies residues 19 to 39 (FGPLIDILPIIPVFFLLLAFV).

Belongs to the PsbK family. As to quaternary structure, PSII is composed of 1 copy each of membrane proteins PsbA, PsbB, PsbC, PsbD, PsbE, PsbF, PsbH, PsbI, PsbJ, PsbK, PsbL, PsbM, PsbT, PsbX, PsbY, PsbZ, Psb30/Ycf12, peripheral proteins PsbO, CyanoQ (PsbQ), PsbU, PsbV and a large number of cofactors. It forms dimeric complexes.

Its subcellular location is the cellular thylakoid membrane. One of the components of the core complex of photosystem II (PSII). PSII is a light-driven water:plastoquinone oxidoreductase that uses light energy to abstract electrons from H(2)O, generating O(2) and a proton gradient subsequently used for ATP formation. It consists of a core antenna complex that captures photons, and an electron transfer chain that converts photonic excitation into a charge separation. This is Photosystem II reaction center protein K from Synechococcus sp. (strain WH7803).